The chain runs to 168 residues: Aphid transmission protein (168 aa).

This sequence belongs to the caulimoviridae ORF II family.

This protein is involved in virus transmission. The sequence is that of Aphid transmission protein from Carnation etched ring virus (CERV).